The primary structure comprises 352 residues: Photosystem II D2 protein (352 aa).

A helical membrane pass occupies residues 40–60 (CAYLAVGAWFTGTTFVTSWYT). H117 lines the chlorophyll a pocket. Residues 124-140 (GFTLRQFEIARLIGLRP) traverse the membrane as a helical segment. Positions 129 and 142 each coordinate pheophytin a. A helical transmembrane segment spans residues 152-165 (VFVSVFLLYPLGQA). Chlorophyll a is bound at residue H197. Residues 207–227 (AALLCAIHGATVENTLFEDGD) traverse the membrane as a helical segment. A plastoquinone is bound by residues H214 and F261. H214 provides a ligand contact to Fe cation. H268 contributes to the Fe cation binding site. A helical transmembrane segment spans residues 278 to 294 (GLWMSAIGVVGLGVNLR).

The protein belongs to the reaction center PufL/M/PsbA/D family. PSII is composed of 1 copy each of membrane proteins PsbA, PsbB, PsbC, PsbD, PsbE, PsbF, PsbH, PsbI, PsbJ, PsbK, PsbL, PsbM, PsbT, PsbX, PsbY, PsbZ, Psb30/Ycf12, at least 3 peripheral proteins of the oxygen-evolving complex and a large number of cofactors. It forms dimeric complexes. It depends on The D1/D2 heterodimer binds P680, chlorophylls that are the primary electron donor of PSII, and subsequent electron acceptors. It shares a non-heme iron and each subunit binds pheophytin, quinone, additional chlorophylls, carotenoids and lipids. There is also a Cl(-1) ion associated with D1 and D2, which is required for oxygen evolution. The PSII complex binds additional chlorophylls, carotenoids and specific lipids. as a cofactor.

The protein resides in the plastid. It localises to the cyanelle thylakoid membrane. The enzyme catalyses 2 a plastoquinone + 4 hnu + 2 H2O = 2 a plastoquinol + O2. Photosystem II (PSII) is a light-driven water:plastoquinone oxidoreductase that uses light energy to abstract electrons from H(2)O, generating O(2) and a proton gradient subsequently used for ATP formation. It consists of a core antenna complex that captures photons, and an electron transfer chain that converts photonic excitation into a charge separation. The D1/D2 (PsbA/PsbD) reaction center heterodimer binds P680, the primary electron donor of PSII as well as several subsequent electron acceptors. D2 is needed for assembly of a stable PSII complex. The sequence is that of Photosystem II D2 protein from Cyanophora paradoxa.